We begin with the raw amino-acid sequence, 432 residues long: Probable anion transporter 5 (432 aa).

The signal sequence occupies residues 1-23 (MKLSNIPQRYVIVFLTFLSTCVC). 11 helical membrane passes run 50 to 70 (TILS…GWAA), 78 to 98 (VLLL…LDPN), 101 to 121 (GLLV…FPSI), 140 to 160 (ITTS…PALV), 164 to 184 (GPES…LLWI), 229 to 249 (LPVW…YVLM), 273 to 293 (VPYL…DYLI), 305 to 325 (KFLN…LPMF), 331 to 351 (VILC…GFAV), 360 to 380 (YAGI…IIGV), and 405 to 425 (VVFF…LLFS).

The protein belongs to the major facilitator superfamily. Sodium/anion cotransporter (TC 2.A.1.14) family. Ubiquitous.

It localises to the golgi apparatus membrane. Inorganic phosphate and probable anion transporter. The polypeptide is Probable anion transporter 5 (ANTR5) (Arabidopsis thaliana (Mouse-ear cress)).